The primary structure comprises 357 residues: Alanine racemase (357 aa).

The active-site Proton acceptor; specific for D-alanine is K34. K34 bears the N6-(pyridoxal phosphate)lysine mark. R127 is a substrate binding site. Y252 serves as the catalytic Proton acceptor; specific for L-alanine. M301 provides a ligand contact to substrate.

It belongs to the alanine racemase family. Pyridoxal 5'-phosphate is required as a cofactor.

It carries out the reaction L-alanine = D-alanine. It participates in amino-acid biosynthesis; D-alanine biosynthesis; D-alanine from L-alanine: step 1/1. In terms of biological role, catalyzes the interconversion of L-alanine and D-alanine. May also act on other amino acids. This chain is Alanine racemase (alr), found in Dichelobacter nodosus (strain VCS1703A).